Here is a 478-residue protein sequence, read N- to C-terminus: Trigger factor (478 aa).

Residues 154–167 (MAKDSRSFEPREEG) show a composition bias toward basic and acidic residues. 2 disordered regions span residues 154 to 173 (MAKD…AQSG) and 441 to 478 (KEAL…KAAG). Positions 173–258 (GDRVTIDFVG…VKAVAAPGET (86 aa)) constitute a PPIase FKBP-type domain.

This sequence belongs to the FKBP-type PPIase family. Tig subfamily.

It localises to the cytoplasm. It catalyses the reaction [protein]-peptidylproline (omega=180) = [protein]-peptidylproline (omega=0). Involved in protein export. Acts as a chaperone by maintaining the newly synthesized protein in an open conformation. Functions as a peptidyl-prolyl cis-trans isomerase. This is Trigger factor from Methylorubrum extorquens (strain CM4 / NCIMB 13688) (Methylobacterium extorquens).